The sequence spans 828 residues: Periplasmic nitrate reductase (828 aa).

Positions 1–31 (MKLSRRSFMKANAVAAAAAAAGLSVPGVARA) form a signal peptide, tat-type signal. The region spanning 39 to 95 (IKWDKAPCRFCGTGCGVLVGTQQGRVVACQGDPDAPVNRGLNCIKGYFLPKIMYGKD) is the 4Fe-4S Mo/W bis-MGD-type domain. Residues cysteine 46, cysteine 49, cysteine 53, and cysteine 81 each contribute to the [4Fe-4S] cluster site. Residues lysine 83, glutamine 150, asparagine 175, cysteine 179, 212–219 (WGSNMAEM), 243–247 (STYQH), 262–264 (QSD), methionine 372, glutamine 376, asparagine 482, 508–509 (SD), lysine 531, aspartate 558, and 718–727 (TGRVLEHWHT) each bind Mo-bis(molybdopterin guanine dinucleotide). Phenylalanine 794 is a substrate binding site. Positions 802 and 819 each coordinate Mo-bis(molybdopterin guanine dinucleotide).

It belongs to the prokaryotic molybdopterin-containing oxidoreductase family. NasA/NapA/NarB subfamily. In terms of assembly, component of the periplasmic nitrate reductase NapAB complex composed of NapA and NapB. [4Fe-4S] cluster is required as a cofactor. The cofactor is Mo-bis(molybdopterin guanine dinucleotide). Post-translationally, predicted to be exported by the Tat system. The position of the signal peptide cleavage has not been experimentally proven.

It localises to the periplasm. It carries out the reaction 2 Fe(II)-[cytochrome] + nitrate + 2 H(+) = 2 Fe(III)-[cytochrome] + nitrite + H2O. In terms of biological role, catalytic subunit of the periplasmic nitrate reductase complex NapAB. Receives electrons from NapB and catalyzes the reduction of nitrate to nitrite. This Escherichia coli O127:H6 (strain E2348/69 / EPEC) protein is Periplasmic nitrate reductase.